A 196-amino-acid polypeptide reads, in one-letter code: Pyridoxal 5'-phosphate synthase subunit PdxT (196 aa).

Residue 47 to 49 (GES) coordinates L-glutamine. The active-site Nucleophile is C79. Residues R106 and 134 to 135 (IR) contribute to the L-glutamine site. Catalysis depends on charge relay system residues H170 and E172.

It belongs to the glutaminase PdxT/SNO family. As to quaternary structure, in the presence of PdxS, forms a dodecamer of heterodimers. Only shows activity in the heterodimer.

The enzyme catalyses aldehydo-D-ribose 5-phosphate + D-glyceraldehyde 3-phosphate + L-glutamine = pyridoxal 5'-phosphate + L-glutamate + phosphate + 3 H2O + H(+). The catalysed reaction is L-glutamine + H2O = L-glutamate + NH4(+). Its pathway is cofactor biosynthesis; pyridoxal 5'-phosphate biosynthesis. Its function is as follows. Catalyzes the hydrolysis of glutamine to glutamate and ammonia as part of the biosynthesis of pyridoxal 5'-phosphate. The resulting ammonia molecule is channeled to the active site of PdxS. The chain is Pyridoxal 5'-phosphate synthase subunit PdxT from Bacillus anthracis (strain A0248).